Consider the following 477-residue polypeptide: Protein nucleotidyltransferase YdiU (477 aa).

Residues Gly89, Gly91, Arg92, Lys112, Asp124, Gly125, Arg178, and Arg185 each coordinate ATP. The active-site Proton acceptor is Asp257. The Mg(2+) site is built by Asn258 and Asp267. Asp267 is a binding site for ATP.

It belongs to the SELO family. Mg(2+) is required as a cofactor. It depends on Mn(2+) as a cofactor.

It carries out the reaction L-seryl-[protein] + ATP = 3-O-(5'-adenylyl)-L-seryl-[protein] + diphosphate. It catalyses the reaction L-threonyl-[protein] + ATP = 3-O-(5'-adenylyl)-L-threonyl-[protein] + diphosphate. The enzyme catalyses L-tyrosyl-[protein] + ATP = O-(5'-adenylyl)-L-tyrosyl-[protein] + diphosphate. The catalysed reaction is L-histidyl-[protein] + UTP = N(tele)-(5'-uridylyl)-L-histidyl-[protein] + diphosphate. It carries out the reaction L-seryl-[protein] + UTP = O-(5'-uridylyl)-L-seryl-[protein] + diphosphate. It catalyses the reaction L-tyrosyl-[protein] + UTP = O-(5'-uridylyl)-L-tyrosyl-[protein] + diphosphate. Functionally, nucleotidyltransferase involved in the post-translational modification of proteins. It can catalyze the addition of adenosine monophosphate (AMP) or uridine monophosphate (UMP) to a protein, resulting in modifications known as AMPylation and UMPylation. The chain is Protein nucleotidyltransferase YdiU from Synechocystis sp. (strain ATCC 27184 / PCC 6803 / Kazusa).